The primary structure comprises 406 residues: Ribonuclease D (406 aa).

The region spanning Leu26 to Glu193 is the 3'-5' exonuclease domain. An HRDC domain is found at Lys231–Thr312.

Belongs to the RNase D family. Requires a divalent metal cation as cofactor.

Its subcellular location is the cytoplasm. The catalysed reaction is Exonucleolytic cleavage that removes extra residues from the 3'-terminus of tRNA to produce 5'-mononucleotides.. In terms of biological role, exonuclease involved in the 3' processing of various precursor tRNAs. Initiates hydrolysis at the 3'-terminus of an RNA molecule and releases 5'-mononucleotides. The polypeptide is Ribonuclease D (Bartonella henselae (strain ATCC 49882 / DSM 28221 / CCUG 30454 / Houston 1) (Rochalimaea henselae)).